The following is a 31-amino-acid chain: Cyclotide mden-M (31 aa).

A cross-link (cyclopeptide (Gly-Asn)) is located at residues 1-31 (GTIPCGESCVYIPCITSALGCSCKKKVCYKN). 3 disulfide bridges follow: Cys-5-Cys-21, Cys-9-Cys-23, and Cys-14-Cys-28.

It belongs to the cyclotide family. Bracelet subfamily. Post-translationally, this is a cyclic peptide.

Probably participates in a plant defense mechanism. This chain is Cyclotide mden-M, found in Melicytus dentatus (Tree violet).